The following is a 470-amino-acid chain: Sperm-associated antigen 8 (470 aa).

A compositionally biased stretch (polar residues) spans 1–21 (METTESTEGSLSRSCDVQPSS). Disordered regions lie at residues 1–70 (METT…PPAH), 117–178 (SGTC…GQGP), and 302–321 (LTTQ…DSYQ). A compositionally biased stretch (low complexity) spans 27–48 (PSEPVPSSSSSPRSTAPAEAPA). Residues 51–60 (SVLTEPSSDS) show a composition bias toward polar residues. 2 stretches are compositionally biased toward low complexity: residues 122-175 (LGQS…ADPG) and 303-316 (TTQP…STTQ). Mn stretches follow at residues 312–325 (SSTT…LPRH) and 364–378 (ESVT…LVRA).

It belongs to the SPAG8 family. As to quaternary structure, microtubule inner protein component of sperm flagellar doublet microtubules. Interacts with FHL5 (via second LIM domain). Interacts with RANBP9. Expressed in testis (at protein level). Not detected in brain, heart, kidney, spleen, liver, lung, thymus and colon (at protein level).

It is found in the cytoplasm. The protein localises to the nucleus. Its subcellular location is the cytoplasmic vesicle. It localises to the secretory vesicle. The protein resides in the acrosome. It is found in the cytoskeleton. The protein localises to the microtubule organizing center. Its subcellular location is the spindle. It localises to the cilium axoneme. The protein resides in the flagellum axoneme. Microtubule inner protein (MIP) part of the dynein-decorated doublet microtubules (DMTs) in cilia axoneme, which is required for motile cilia beating. Plays a role in spermatogenesis by enhancing the binding of CREM isoform tau to its coactivator FHL5 and increasing the FHL5-regulated transcriptional activation of CREM isoform tau. Involved in the acrosome reaction and in binding of sperm to the zona pellucida. Plays a role in regulation of the cell cycle by controlling progression through the G2/M phase, possibly by delaying the activation of CDK1 which is required for entry into mitosis. May play a role in fertility and microtubule formation through interaction with RANBP9. The protein is Sperm-associated antigen 8 of Mus musculus (Mouse).